A 309-amino-acid chain; its full sequence is MNHLKTFILLAGLTALFVGAGYMIGGPTGMLVALVLAVGMNLFSYWNADKIVLRMYGAVEVDASHPEPRVRAYVADVEDLARRAGLPRPRITVIDSQQPNAFATGRDPDHAAVAASTGLLGLLDRDEIRGVMAHELAHVKNRDTLTMTVTATIAGAISALANFAFFFGGSRDDDERPGGLVGTIALAILAPIAAMLVQMAISRSREYEADRIGAQIAGDGLALARALEKIEAYARGGAVNVEAERNPATAHLFIINPLSGRGRDSLFSTHPATRNRVEALLRLGVSQATRGRSGTAVPTGATGKSGPWG.

Helical transmembrane passes span 7 to 27 (FILL…IGGP) and 28 to 48 (TGML…YWNA). His-134 is a Zn(2+) binding site. The active site involves Glu-135. His-138 serves as a coordination point for Zn(2+). 2 consecutive transmembrane segments (helical) span residues 149-169 (VTAT…FFGG) and 177-197 (PGGL…AMLV). Residue Glu-206 participates in Zn(2+) binding. The segment at 289 to 309 (TRGRSGTAVPTGATGKSGPWG) is disordered.

This sequence belongs to the peptidase M48B family. The cofactor is Zn(2+).

It is found in the cell inner membrane. In Caulobacter sp. (strain K31), this protein is Protease HtpX homolog.